A 345-amino-acid polypeptide reads, in one-letter code: S-adenosylmethionine:tRNA ribosyltransferase-isomerase (345 aa).

This sequence belongs to the QueA family. Monomer.

The protein localises to the cytoplasm. It carries out the reaction 7-aminomethyl-7-carbaguanosine(34) in tRNA + S-adenosyl-L-methionine = epoxyqueuosine(34) in tRNA + adenine + L-methionine + 2 H(+). It participates in tRNA modification; tRNA-queuosine biosynthesis. Its function is as follows. Transfers and isomerizes the ribose moiety from AdoMet to the 7-aminomethyl group of 7-deazaguanine (preQ1-tRNA) to give epoxyqueuosine (oQ-tRNA). The chain is S-adenosylmethionine:tRNA ribosyltransferase-isomerase from Anaeromyxobacter dehalogenans (strain 2CP-1 / ATCC BAA-258).